The following is a 1155-amino-acid chain: Polarized growth protein rax2 (1155 aa).

A signal peptide spans 1-27 (MAIYSSFWIRLYFTFRFFCYFLTSVVA). Topologically, residues 28–1105 (SDVSFLGDFS…KYDHIGQPRY (1078 aa)) are extracellular. Residues asparagine 44, asparagine 61, asparagine 103, asparagine 118, asparagine 124, asparagine 156, asparagine 161, asparagine 182, asparagine 190, asparagine 213, asparagine 224, asparagine 306, asparagine 391, asparagine 413, asparagine 419, asparagine 510, asparagine 519, asparagine 554, asparagine 562, asparagine 607, asparagine 630, asparagine 713, asparagine 722, asparagine 743, asparagine 769, asparagine 793, asparagine 807, asparagine 824, asparagine 840, asparagine 848, asparagine 876, asparagine 893, asparagine 899, asparagine 916, asparagine 945, asparagine 1009, asparagine 1030, and asparagine 1055 are each glycosylated (N-linked (GlcNAc...) asparagine). A helical transmembrane segment spans residues 1106-1126 (VVIISLGISIGVMFLIMSGSI). The Cytoplasmic segment spans residues 1127–1155 (VVEIIHWFFSEHVETLHDYSNFLKELKTQ).

Belongs to the RAX2 family. In terms of assembly, interacts with for3 and tea1.

Its subcellular location is the cell membrane. Functionally, controls cell polarity, through the G1 phase of mitosis, via regulation of for3 localization. Required for actin cable formation where it directs the spatial distribution of the actin cables. This chain is Polarized growth protein rax2, found in Schizosaccharomyces pombe (strain 972 / ATCC 24843) (Fission yeast).